The primary structure comprises 36 residues: uncharacterized protein (36 aa).

This is an uncharacterized protein from Spiroplasma melliferum (SpV1).